The primary structure comprises 49 residues: uncharacterized protein (49 aa).

This is an uncharacterized protein from Enterobacteria phage T3 (Bacteriophage T3).